The following is a 301-amino-acid chain: Type II restriction enzyme BslI subunit beta (301 aa).

A CHC2-type zinc finger spans residues 62–82 (CPDGHTKWNQNLTKEMTCSEC).

As to quaternary structure, heterotetramer of two alpha and two beta subunits. The alpha subunit is believed to be responsible for DNA recognition, while the beta subunit is thought to mediate cleavage. The cofactor is Zn(2+).

The catalysed reaction is Endonucleolytic cleavage of DNA to give specific double-stranded fragments with terminal 5'-phosphates.. A P subtype restriction enzyme that recognizes the double-stranded sequence 5'-CCN(7)GG-3' and cleaves after N-7. This Bacillus sp. (strain NEB-606) protein is Type II restriction enzyme BslI subunit beta.